We begin with the raw amino-acid sequence, 198 residues long: Outer-membrane lipoprotein carrier protein (198 aa).

Residues 1–17 (MKKFLFSLCLLSSTVLA) form the signal peptide.

The protein belongs to the LolA family. In terms of assembly, monomer.

It localises to the periplasm. Participates in the translocation of lipoproteins from the inner membrane to the outer membrane. Only forms a complex with a lipoprotein if the residue after the N-terminal Cys is not an aspartate (The Asp acts as a targeting signal to indicate that the lipoprotein should stay in the inner membrane). The polypeptide is Outer-membrane lipoprotein carrier protein (Aliivibrio fischeri (strain MJ11) (Vibrio fischeri)).